A 222-amino-acid polypeptide reads, in one-letter code: N-(5'-phosphoribosyl)anthranilate isomerase (222 aa).

Belongs to the TrpF family.

It catalyses the reaction N-(5-phospho-beta-D-ribosyl)anthranilate = 1-(2-carboxyphenylamino)-1-deoxy-D-ribulose 5-phosphate. Its pathway is amino-acid biosynthesis; L-tryptophan biosynthesis; L-tryptophan from chorismate: step 3/5. The protein is N-(5'-phosphoribosyl)anthranilate isomerase of Xanthomonas oryzae pv. oryzae (strain PXO99A).